Consider the following 1435-residue polypeptide: MEEHVFGVQQIQPNVISVRLFKRKVGGLGFLVKERVSKPPVIISDLIRGGAAEQSGLIQAGDIILAVNGRPLVDLSYDSALEVLRGVASETHVVLILRGPEGFTTNLETTFTGDGTPKTIRVTQPLGAPTKAVDLSHQPPSAGKEQPRPVDGAAGPGSWPQPTQGHGQEAGSPSRANGLAPRTSSQDPAKKSGWAGLQGSGDKNELLKEIEPVLTLLAGGSKAVDGGGPAKAETRDTGVQVDRDFDAKSHKPLPLGVENDRVFSDLWGKGSAPVVLNNPYSEKEQPPASGKQSPTKNGSPSKCPRFLKVKNWETDVVLTDTLHLKSTLETGCTEHICMGSIMFPSQHTRRPEDIRTKEQLFPLAKEFIDQYYSSIKRFGSKAHMERLEEVNKEIESTSTYQLKDTELIYGAKHAWRNASRCVGRIQWSKLQVFDARDCTTAHGMFNYICNHIKYATNKGNLRSAITIFPQRTDGKHDFRVWNSQLIRYAGYKQPDGSTLGDPANVQFTEICIQQGWKPPRSRFDVLPLLLQANGNDPELFQIPPELVLEVPIRHPKFEWFKDLGLKWYGLPAVSNMLLEIGGLEFSACPFSGWYMGTEIGVRDYCDNSRYNILEEVAKKMNLDMRKTSSLWKDQALVEINIAVLYSFQSDKVTIVDHHSATESFIKHMENEYRCRGGCPADWVWIVPPMSGSITPVFHQEMLNYRLTPCFEYQPDPWNTHVWKGTNGTPTKRRAIGFKKLAEAVKFSAKLMGQAMAKRVKATILYATETGKSQAYAKTLCEIFKHAFDAKVMSMEEYDIVHLEHETLVLVVTSTFGNGDPPENGEKFRCALMEMRHPNSLQEERKSYKVRFNSVSSYSDSRKSSGDGPDVRDHFESAGPLANVRFSVFGLGSRAYPHFCAFGHAVDTLLEELGGERILKMREGDELCGQEEAFRTWAKKVFKAACDVFCVGDDVNIEKANNSLISNDRSWKRNKFRLTYVAEAPGLTQGLSSVHKKRVSAARLLSRQNLQSPKSSRSTIFVRLHTNGSQELQYQPGDHLGVFPGNHEDLVNALIERLEDAPPANQMVKVELLEERNTALGVISNWKDEPRLPPCTVFQAFKYYLDITTPPTPLQLQQFASLASNEKEKQRLLVLSKGLQEYEEWKWGKNPTIVEVLEEFPSIQMPATLLLTQLSLLQPRYYSISSSPDMYPDEVHLTVAIVSYHTRDGEGPIHHGVCSSWLNRIPADEVVPCFVRGAPSFRLPRNPQVPCILVGPGTAFAPFRSFWQQRQFDIQHKGMSPCPMVLVFGCRQSKIDHIYREEALQAKNKGVFRELYTAYSREPDKPKKYVQDILQEQLAEQVYRALKEQGGHIYVCGDVTMAADVLKAVQRIMAQQGKLSAEDAGVFISRLRDDNRYHEDIFGVTLRTYEVTNRLRSESIAFIEESKKDTDEVFSS.

The interval 1 to 206 (MEEHVFGVQQ…LQGSGDKNEL (206 aa)) is interaction with NOSIP. The PDZ domain maps to 17 to 99 (SVRLFKRKVG…ETHVVLILRG (83 aa)). Disordered regions lie at residues 110–201 (TFTG…QGSG) and 277–304 (NNPYSEKEQPPASGKQSPTKNGSPSKCP). An interaction with DYNLL1/PIN region spans residues 164–246 (QGHGQEAGSP…TGVQVDRDFD (83 aa)). The span at 290–300 (GKQSPTKNGSP) shows a compositional bias: polar residues. (6R)-L-erythro-5,6,7,8-tetrahydrobiopterin is bound at residue Ser-340. Cys-421 contributes to the heme b binding site. Residues Gln-484, Trp-593, Tyr-594, and Glu-598 each coordinate L-arginine. The (6R)-L-erythro-5,6,7,8-tetrahydrobiopterin site is built by Val-683, Trp-684, and Phe-697. Tyr-712 contacts heme b. The segment at 731–751 (KRRAIGFKKLAEAVKFSAKLM) is calmodulin-binding. The region spanning 761-941 (ATILYATETG…AFRTWAKKVF (181 aa)) is the Flavodoxin-like domain. Residues Thr-767, Glu-768, Thr-769, Lys-771, Ser-772, Ser-813, Thr-814, and Gly-818 each contribute to the FMN site. Phosphoserine is present on residues Ser-853, Ser-863, and Ser-864. FMN-binding residues include Ser-892, His-897, Cys-899, Glu-925, and Gln-929. The FAD-binding FR-type domain maps to 996-1243 (KRVSAARLLS…VRGAPSFRLP (248 aa)). NADP(+) is bound at residue Arg-1016. His-1038, Arg-1179, Tyr-1180, Tyr-1181, Ser-1182, Thr-1197, and Ala-1199 together coordinate FAD. Ser-1202 serves as a coordination point for NADP(+). The FAD site is built by Tyr-1203, Val-1216, Cys-1217, and Ser-1218. NADP(+)-binding residues include Thr-1257, Arg-1290, Ser-1319, Arg-1320, Lys-1326, Tyr-1328, Gln-1330, Asp-1363, Thr-1404, and Arg-1406.

Belongs to the NOS family. As to quaternary structure, homodimer. Interacts with DLG4; the interaction possibly being prevented by the association between NOS1 and CAPON. Forms a ternary complex with CAPON and RASD1. Forms a ternary complex with CAPON and SYN1. Interacts with ZDHHC23. Interacts with NOSIP; which may impair its synaptic location. Interacts with HTR4. Interacts with SLC6A4. Interacts with VAC14. Interacts (via N-terminal domain) with DLG4 (via N-terminal tandem pair of PDZ domains). Interacts with SLC6A4. Forms a complex with ASL, ASS1 and SLC7A1; the complex regulates cell-autonomous L-arginine synthesis and citrulline recycling while channeling extracellular L-arginine to nitric oxide synthesis pathway. Interacts with DMD; localizes NOS1 to sarcolemma in muscle cells. Interacts with DYNLL1; inhibits the nitric oxide synthase activity. It depends on heme b as a cofactor. The cofactor is FAD. Requires FMN as cofactor. (6R)-L-erythro-5,6,7,8-tetrahydrobiopterin serves as cofactor. Ubiquitinated; mediated by STUB1/CHIP in the presence of Hsp70 and Hsp40 (in vitro).

Its subcellular location is the cell membrane. It is found in the sarcolemma. The protein localises to the cell projection. It localises to the dendritic spine. It carries out the reaction 2 L-arginine + 3 NADPH + 4 O2 + H(+) = 2 L-citrulline + 2 nitric oxide + 3 NADP(+) + 4 H2O. With respect to regulation, stimulated by calcium/calmodulin. Inhibited by DYNLL1 that prevents the dimerization of the protein. Inhibited by NOSIP. Functionally, produces nitric oxide (NO) which is a messenger molecule with diverse functions throughout the body. In the brain and peripheral nervous system, NO displays many properties of a neurotransmitter. Probably has nitrosylase activity and mediates cysteine S-nitrosylation of cytoplasmic target proteins such SRR. The protein is Nitric oxide synthase 1 (NOS1) of Oryctolagus cuniculus (Rabbit).